Consider the following 112-residue polypeptide: ATP-dependent Clp protease adapter protein ClpS (112 aa).

Belongs to the ClpS family. Binds to the N-terminal domain of the chaperone ClpA.

Involved in the modulation of the specificity of the ClpAP-mediated ATP-dependent protein degradation. This chain is ATP-dependent Clp protease adapter protein ClpS, found in Rhodococcus opacus (strain B4).